The following is a 279-amino-acid chain: Large ribosomal subunit protein uL2 (279 aa).

2 disordered regions span residues 33–58 (LLAP…GGGH) and 223–279 (GVAM…RKRG). 2 stretches are compositionally biased toward basic residues: residues 40-58 (KGGR…GGGH) and 269-279 (VRRRYATRKRG).

It belongs to the universal ribosomal protein uL2 family. Part of the 50S ribosomal subunit. Forms a bridge to the 30S subunit in the 70S ribosome.

Its function is as follows. One of the primary rRNA binding proteins. Required for association of the 30S and 50S subunits to form the 70S ribosome, for tRNA binding and peptide bond formation. It has been suggested to have peptidyltransferase activity; this is somewhat controversial. Makes several contacts with the 16S rRNA in the 70S ribosome. The protein is Large ribosomal subunit protein uL2 of Salinispora arenicola (strain CNS-205).